Reading from the N-terminus, the 630-residue chain is Prolactin receptor (630 aa).

The first 23 residues, 1-23, serve as a signal peptide directing secretion; the sequence is MMTKVGEVLLLLLLPAFVPHTDG. The Extracellular portion of the chain corresponds to 24-234; that stretch reads THYSLPGKPT…VKVPEYLHRE (211 aa). Fibronectin type-III domains are found at residues 31 to 128 and 130 to 230; these read KPTE…IVQP and PPEK…VPEY. Disulfide bonds link Cys37–Cys47 and Cys76–Cys87. Asn92 and Asn101 each carry an N-linked (GlcNAc...) asparagine glycan. The Zn(2+) site is built by Asp212 and His213. The WSXWS motif signature appears at 216–220; the sequence is WSEWS. Residues 235–258 form a helical membrane-spanning segment; that stretch reads KSVWILVLVFSAFILLLLTWLIHM. Residues 259 to 630 lie on the Cytoplasmic side of the membrane; that stretch reads NSHSLKHCML…DTATVFSVHT (372 aa). Residues 267 to 275 carry the Box 1 motif motif; the sequence is MLPPVPGPK. The disordered stretch occupies residues 339-389; that stretch reads KSIGSASDSDSGRGSCDSDNLLMDKSGAPKEEQQQQNQEGDQIGKETQGPK. Positions 340 to 357 are enriched in low complexity; the sequence is SIGSASDSDSGRGSCDSD. Basic and acidic residues predominate over residues 380-389; it reads QIGKETQGPK.

The protein belongs to the type I cytokine receptor family. Type 1 subfamily.

The protein resides in the membrane. In terms of biological role, this is a receptor for the anterior pituitary hormone prolactin. The chain is Prolactin receptor (prlr) from Oreochromis niloticus (Nile tilapia).